The chain runs to 477 residues: Solute carrier family 2, facilitated glucose transporter member 8 (477 aa).

Topologically, residues 1–25 (MSPEDPQETQPLLRPPEARTPRGRR) are cytoplasmic. The Dileucine internalization motif signature appears at 12–13 (LL). The helical transmembrane segment at 26–46 (VFLASFAAALGPLSFGFALGY) threads the bilayer. At 47–70 (SSPAIPSLRRTAPPALRLGDNAAS) the chain is on the extracellular side. A helical transmembrane segment spans residues 71-91 (WFGAVVTLGAAAGGILGGWLL). At 92 to 96 (DRAGR) the chain is on the cytoplasmic side. Residues 97–117 (KLSLLLCTVPFVTGFAVITAA) form a helical membrane-spanning segment. Topologically, residues 118 to 127 (RDVWMLLGGR) are extracellular. A helical transmembrane segment spans residues 128–148 (LLTGLACGVASLVAPVYISEI). Residues 149-156 (AYPAVRGL) are Cytoplasmic-facing. A helical membrane pass occupies residues 157–177 (LGSCVQLMVVTGILLAYVAGW). Q162 lines the D-glucose pocket. The Extracellular segment spans residues 178–182 (VLEWR). The helical transmembrane segment at 183-203 (WLAVLGCVPPTLMLLLMCYMP) threads the bilayer. The Cytoplasmic segment spans residues 204 to 257 (ETPRFLLTQHQYQEAMAALRFLWGSEEGWEEPPVGAEHQGFQLALLRRPGIYKP). Residues 258 to 278 (LIIGISLMVFQQLSGVNAIMF) traverse the membrane as a helical segment. Residues 268 to 269 (QQ) and N274 each bind D-glucose. Topologically, residues 279 to 293 (YANSIFEEAKFKDSS) are extracellular. The helical transmembrane segment at 294–314 (LASVTVGIIQVLFTAVAALIM) threads the bilayer. Topologically, residues 315 to 320 (DRAGRR) are cytoplasmic. Residues 321–341 (LLLALSGVIMVFSMSAFGTYF) traverse the membrane as a helical segment. Over 342-367 (KLTQSLPSNSSHVGLVPIAAEPVDVQ) the chain is Extracellular. Residue N350 is glycosylated (N-linked (GlcNAc...) asparagine). The helical transmembrane segment at 368 to 388 (VGLAWLAVGSMCLFIAGFAVG) threads the bilayer. Residues 389-404 (WGPIPWLLMSEIFPLH) lie on the Cytoplasmic side of the membrane. Position 394 (W394) interacts with D-glucose. The chain crosses the membrane as a helical span at residues 405-425 (VKGVATGICVLTNWFMAFLVT). Over 426–438 (KEFSSVMEMLRPY) the chain is Extracellular. The chain crosses the membrane as a helical span at residues 439–459 (GAFWLTAAFCALSVLFTLTVV). Residues 460–477 (PETKGRTLEQVTAHFEGR) are Cytoplasmic-facing.

Belongs to the major facilitator superfamily. Sugar transporter (TC 2.A.1.1) family. Glucose transporter subfamily. In terms of assembly, interacts with AP2B1. Also able to mediate the transport of dehydroascorbate. As to expression, highest level of expression in placenta and testis. Highly expressed in adult and pubertal testis, but not prepubertal testis. Lower levels of expression in brain, liver, heart, kidney, fat and skeletal muscle.

The protein localises to the cell membrane. It localises to the cytoplasmic vesicle membrane. It catalyses the reaction D-glucose(out) = D-glucose(in). The enzyme catalyses D-fructose(out) = D-fructose(in). It carries out the reaction L-dehydroascorbate(out) = L-dehydroascorbate(in). The catalysed reaction is alpha,alpha-trehalose(in) = alpha,alpha-trehalose(out). Inhibited by cytochalasin B. Insulin-regulated facilitative hexose transporter that mediates the transport of glucose and fructose. Facilitates hepatic influx of dietary trehalose, which in turn inhibits glucose and fructose influx triggering a starvation signal and hepatic autophagy through activation of AMPK and ULK1. Also able to mediate the transport of dehydroascorbate. In Mus musculus (Mouse), this protein is Solute carrier family 2, facilitated glucose transporter member 8.